The chain runs to 215 residues: UPF0502 protein YceH (215 aa).

Lysine 80 is modified (N6-acetyllysine).

It belongs to the UPF0502 family.

This Shigella boydii serotype 18 (strain CDC 3083-94 / BS512) protein is UPF0502 protein YceH.